The primary structure comprises 306 residues: Zinc finger protein 625 (306 aa).

Residues 31–53 (PRVKSCGEVSVGHASLNRHHRAD) form a C2H2-type 1; degenerate zinc finger. C2H2-type zinc fingers lie at residues 69-91 (YKCT…EWAH), 97-119 (YDCE…RIMH), 125-147 (YKCN…KRTH), 153-175 (YECK…ERTH), 181-203 (YECS…KITH), 209-231 (YECK…ERTH), 237-259 (YECK…GRTH), and 265-287 (YECK…ERTH). At tyrosine 209 the chain carries Phosphotyrosine. Residues 287-306 (HTGEKPCSSNTSKGQGEKIA) are disordered.

The protein belongs to the krueppel C2H2-type zinc-finger protein family.

It is found in the nucleus. May be involved in transcriptional regulation. This is Zinc finger protein 625 (ZNF625) from Homo sapiens (Human).